A 446-amino-acid chain; its full sequence is Corrinoid/iron-sulfur protein large subunit (446 aa).

A 4Fe-4S domain is found at 2–59 (PLTGLEIYKQLPKKNCGECGTPTCLAFAMNLASGKASLDSCPYVSDAAREALDAAAAP). [4Fe-4S] cluster-binding residues include Cys17, Cys20, Cys25, and Cys42. Residues Thr340, Thr346, 370–373 (GLSV), and Ala433 each bind 5-methoxybenzimidazolylcob(I)amide.

In terms of assembly, heterohexamer composed of 2 subunits of AcsC, 2 subunits of AcsD and 2 subunits of AcsE. [4Fe-4S] cluster is required as a cofactor.

Functionally, acts as a methyl group carrier in the anaerobic acetyl-CoA pathway (Wood-Ljungdahl pathway) of carbon monoxide and carbon dioxide fixation. Binds the corrinoid 5-methoxybenzimidazolylcobamide which is then methylated by the AcsE subunit. The sequence is that of Corrinoid/iron-sulfur protein large subunit (acsC) from Moorella thermoacetica (Clostridium thermoaceticum).